The primary structure comprises 380 residues: Cytochrome b (380 aa).

4 helical membrane passes run 33–53, 77–98, 113–133, and 178–198; these read FGSLLGICLMVQIITGLFLAM, WLIRYAHANGASMFFICLFIHV, WNIGIILLLTTMATAFVGYVL, and FFAFHFILPFIITALVLVHLL. Residues histidine 83 and histidine 97 each contribute to the heme b site. Heme b-binding residues include histidine 182 and histidine 196. Histidine 201 contributes to the a ubiquinone binding site. The next 4 membrane-spanning stretches (helical) occupy residues 226-246, 288-308, 320-340, and 347-367; these read IKDILGVLLLLMVLMFLVLFF, LGGVLALLLSILILAAFPLLN, ITQTLYWIFVANLLILTWIGG, and FTTIGQISSIMYFMIIVIFMP.

Belongs to the cytochrome b family. As to quaternary structure, the cytochrome bc1 complex contains 11 subunits: 3 respiratory subunits (MT-CYB, CYC1 and UQCRFS1), 2 core proteins (UQCRC1 and UQCRC2) and 6 low-molecular weight proteins (UQCRH/QCR6, UQCRB/QCR7, UQCRQ/QCR8, UQCR10/QCR9, UQCR11/QCR10 and a cleavage product of UQCRFS1). This cytochrome bc1 complex then forms a dimer. It depends on heme b as a cofactor.

The protein resides in the mitochondrion inner membrane. Functionally, component of the ubiquinol-cytochrome c reductase complex (complex III or cytochrome b-c1 complex) that is part of the mitochondrial respiratory chain. The b-c1 complex mediates electron transfer from ubiquinol to cytochrome c. Contributes to the generation of a proton gradient across the mitochondrial membrane that is then used for ATP synthesis. The polypeptide is Cytochrome b (MT-CYB) (Microryzomys minutus (Forest small rice rat)).